A 428-amino-acid polypeptide reads, in one-letter code: MIDPKLLRGDLTDLQQQLATRGYTLDIAFWQNIENERKSLQVKTEELQSRRNTGAKQVGVLKKSGEDASELLAEMQSVSGEIKTAEDELRTLQERISQAAMQIPNIPAADVPVGTSEDDNVEVRKWGTPREFDFEIKDHTHIGETLGMLDFEAATKLTGSRFNVLKGQLAQMHRALIQFMLNTHTIKYGYTETYVPYIVNSESLKGTGQLPKFEDDLFKLTNHTNNDDMDFYLIPTAEVPMTNLVRGERLDIKELPLKFTAHTPCFRSEAGSHGRDTRGLIRQHQFEKVEMVNIATAEQSDELLEAMTGQAEFILQQLNLPYRTVKLCTGDMGFAAQKTYDIEVWLPSQETYREISSCSNCGDFQARRMGTRVKDGKQTSLAHTLNGSGLAVGRTLLAVMENHQNADGSITIPEVLRPFMGGADIILL.

Residue 236–238 (TAE) participates in L-serine binding. 267-269 (RSE) is a binding site for ATP. Glutamate 290 lines the L-serine pocket. 354–357 (EISS) serves as a coordination point for ATP. Residue serine 388 coordinates L-serine.

It belongs to the class-II aminoacyl-tRNA synthetase family. Type-1 seryl-tRNA synthetase subfamily. In terms of assembly, homodimer. The tRNA molecule binds across the dimer.

It is found in the cytoplasm. The catalysed reaction is tRNA(Ser) + L-serine + ATP = L-seryl-tRNA(Ser) + AMP + diphosphate + H(+). It carries out the reaction tRNA(Sec) + L-serine + ATP = L-seryl-tRNA(Sec) + AMP + diphosphate + H(+). Its pathway is aminoacyl-tRNA biosynthesis; selenocysteinyl-tRNA(Sec) biosynthesis; L-seryl-tRNA(Sec) from L-serine and tRNA(Sec): step 1/1. Its function is as follows. Catalyzes the attachment of serine to tRNA(Ser). Is also able to aminoacylate tRNA(Sec) with serine, to form the misacylated tRNA L-seryl-tRNA(Sec), which will be further converted into selenocysteinyl-tRNA(Sec). The sequence is that of Serine--tRNA ligase from Psychrobacter cryohalolentis (strain ATCC BAA-1226 / DSM 17306 / VKM B-2378 / K5).